The sequence spans 480 residues: RNA-splicing ligase RtcB homolog (480 aa).

Positions 93, 96, 202, 234, and 328 each coordinate Mn(2+). Position 201–205 (201–205 (NHYTE)) interacts with GMP. Residues 328–329 (HN), 377–380 (GGTM), serine 384, 403–406 (HGAG), and lysine 479 contribute to the GMP site. Histidine 403 serves as the catalytic GMP-histidine intermediate.

It belongs to the RtcB family. In terms of assembly, catalytic component of the tRNA-splicing ligase complex. Requires Mn(2+) as cofactor.

The enzyme catalyses a 3'-end 3'-phospho-ribonucleotide-RNA + a 5'-end dephospho-ribonucleoside-RNA + GTP = a ribonucleotidyl-ribonucleotide-RNA + GMP + diphosphate. It catalyses the reaction a 3'-end 2',3'-cyclophospho-ribonucleotide-RNA + a 5'-end dephospho-ribonucleoside-RNA + GTP + H2O = a ribonucleotidyl-ribonucleotide-RNA + GMP + diphosphate + H(+). Its function is as follows. Catalytic subunit of the tRNA-splicing ligase complex that acts by directly joining spliced tRNA halves to mature-sized tRNAs by incorporating the precursor-derived splice junction phosphate into the mature tRNA as a canonical 3',5'-phosphodiester. May act as an RNA ligase with broad substrate specificity, and may function toward other RNAs. This is RNA-splicing ligase RtcB homolog from Thalassiosira pseudonana (Marine diatom).